Here is a 68-residue protein sequence, read N- to C-terminus: Protein SlyX homolog (68 aa).

The protein belongs to the SlyX family.

In Pseudomonas fluorescens (strain SBW25), this protein is Protein SlyX homolog.